The sequence spans 184 residues: UPF0316 protein YebE (184 aa).

The next 3 membrane-spanning stretches (helical) occupy residues 9–29 (GIAM…FFTI), 41–61 (LAAG…SLVL), and 67–87 (IQNV…GMKI).

This sequence belongs to the UPF0316 family.

The protein resides in the cell membrane. The polypeptide is UPF0316 protein YebE (yebE) (Bacillus subtilis (strain 168)).